The following is a 901-amino-acid chain: Serine/threonine-protein kinase-like protein CR4 (901 aa).

The first 22 residues, 1-22, serve as a signal peptide directing secretion; sequence MDIVPVVALCCCLVLLPSWAYG. A run of 7 repeats spans residues 31–66, 70–105, 123–158, 160–193, 201–234, 251–285, and 290–328. The segment at 31-328 is 7 X 36 AA repeats; sequence VSYGEDGPVF…PLALPMAVSP (298 aa). 2 N-linked (GlcNAc...) asparagine glycosylation sites follow: Asn-149 and Asn-177. N-linked (GlcNAc...) asparagine glycosylation is present at Asn-280. The stretch at 335–389 is one TNFR-Cys repeat; it reads SCSHGYYEYANHGEVGSGSKTCKPANSRLCLPCSVGCPDDSYESSPCNATADRVC. 3 cysteine pairs are disulfide-bonded: Cys-336/Cys-364, Cys-367/Cys-381, and Cys-371/Cys-389. A glycan (N-linked (GlcNAc...) asparagine) is linked at Asn-382. The helical transmembrane segment at 423–443 threads the bilayer; the sequence is IFVAEIAFAVILVFSVTAIAC. The region spanning 504–781 is the Protein kinase domain; that stretch reads FSEDSQVGKG…KVTTALERAL (278 aa). ATP contacts are provided by residues 510–518 and Lys-532; that span reads VGKGSFSCV. The active-site Proton acceptor is the Asp-633. Positions 845-901 are disordered; that stretch reads VTSSQRRKSSASEADMDGRTTTDGRNVGSSIGDGLRSLEEEISPASPQENLYLQHNF. The span at 889–901 shows a compositional bias: polar residues; the sequence is ASPQENLYLQHNF.

This sequence belongs to the protein kinase superfamily. Ser/Thr protein kinase family. As to quaternary structure, homodimer. In terms of processing, autophosphorylated. In terms of tissue distribution, specifically expressed in the epidermal cells of paleas and lemmas.

It localises to the cell membrane. The protein resides in the endosome. Its subcellular location is the multivesicular body membrane. The enzyme catalyses L-seryl-[protein] + ATP = O-phospho-L-seryl-[protein] + ADP + H(+). It carries out the reaction L-threonyl-[protein] + ATP = O-phospho-L-threonyl-[protein] + ADP + H(+). Its function is as follows. Receptor protein kinase. Could play a role in a differentiation signal. Controls formative cell division in meristems. Regulates epidermal cell differentiation in many organs. During floral organogenesis, required to maintain the interlocking of the palea and lemma, and fertility. Triggers culm elongation. In Oryza sativa subsp. japonica (Rice), this protein is Serine/threonine-protein kinase-like protein CR4.